Consider the following 1209-residue polypeptide: Nitric oxide synthase (1209 aa).

Serine 103 is a binding site for (6R)-L-erythro-5,6,7,8-tetrahydrobiopterin. Residue cysteine 181 participates in heme b binding. Positions 244, 353, 354, 358, and 363 each coordinate L-arginine. (6R)-L-erythro-5,6,7,8-tetrahydrobiopterin is bound by residues tryptophan 444 and phenylalanine 457. Tyrosine 472 serves as a coordination point for heme b. The tract at residues 491–511 (VHRKFHFKQIARAVKFTSKLF) is calmodulin-binding. In terms of domain architecture, Flavodoxin-like spans 521 to 723 (ATILYATETG…QFRAWSSKIF (203 aa)). Residue 527-531 (TETGK) coordinates FMN. Positions 603–622 (RGDGTSDLGSGTFKTPTPKS) are disordered. 669–700 (VFGLGSSAYPKFCHFGKTVDKILGDLGGERIL) lines the FMN pocket. The region spanning 776–1021 (KQLITCKVKE…IRRAPSFHMP (246 aa)) is the FAD-binding FR-type domain. FAD-binding positions include 811–822 (YDPGDHVGVLAC) and 954–964 (LQPRFYSISSS). Residues 1028-1147 (LILV…QQKL) and 1128-1143 (NGHFYVCGDCKMAEEV) contribute to the NADP(+) site.

This sequence belongs to the NOS family. Heme b is required as a cofactor. It depends on FAD as a cofactor. FMN serves as cofactor. As to expression, constitutively expressed at a low level in the larval fat body, hemocyte, Malpighian tubule, midgut, silk gland and adult antenna.

It carries out the reaction 2 L-arginine + 3 NADPH + 4 O2 + H(+) = 2 L-citrulline + 2 nitric oxide + 3 NADP(+) + 4 H2O. Its activity is regulated as follows. Expression is dependent on and stimulated by NADPH, calcium, BH4 and calmodulin. The activity is not dependent on FAD and is not stimulated by its presence. Produces nitric oxide (NO) which is a messenger molecule with diverse functions throughout the body. Involved in the induction of immune gene expression. This chain is Nitric oxide synthase, found in Bombyx mori (Silk moth).